Reading from the N-terminus, the 171-residue chain is Apoptosis regulator Bcl-2 homolog (171 aa).

Interacts with host BECN1; this interaction inhibits host autophagy. Interacts with host BAK1 and BAX.

The protein resides in the host cytoplasm. Plays a role in the protection against apoptosis mediated by cytotoxic cells during the immune response to acute and persistent viral infection. Contributes therefore to latency establishment. Plays also a role in the inhibition of host starvation-induced autophagy which ultimately contributes to the viral chronic infection. The protein is Apoptosis regulator Bcl-2 homolog (vBCL2) of Murid herpesvirus 4 (MuHV-4).